The following is a 476-amino-acid chain: Glutamate--tRNA ligase (476 aa).

A 'HIGH' region motif is present at residues 9-19 (PSPTGTLHIGT). A 'KMSKS' region motif is present at residues 248–252 (KLSKR). Lys251 contributes to the ATP binding site.

The protein belongs to the class-I aminoacyl-tRNA synthetase family. Glutamate--tRNA ligase type 1 subfamily. As to quaternary structure, monomer.

The protein resides in the cytoplasm. The catalysed reaction is tRNA(Glu) + L-glutamate + ATP = L-glutamyl-tRNA(Glu) + AMP + diphosphate. Its function is as follows. Catalyzes the attachment of glutamate to tRNA(Glu) in a two-step reaction: glutamate is first activated by ATP to form Glu-AMP and then transferred to the acceptor end of tRNA(Glu). The sequence is that of Glutamate--tRNA ligase from Synechococcus sp. (strain CC9311).